We begin with the raw amino-acid sequence, 89 residues long: MEIPKLLYIAVIAIGLSGSLTCATPLANPWGDPEAEANPEAKATAEATAEAIAEALAEPEPALPALPLLMFLFTLPALQHWIEKNWING.

The signal sequence occupies residues 1–22 (MEIPKLLYIAVIAIGLSGSLTC). A propeptide spanning residues 23-61 (ATPLANPWGDPEAEANPEAKATAEATAEAIAEALAEPEP) is cleaved from the precursor. An Asparagine amide modification is found at N88.

Belongs to the formicidae venom clade 1 family. As to expression, expressed by the venom gland.

The protein localises to the secreted. In terms of biological role, toxin that potently modulates mammalian voltage-gated sodium (Nav) channels, reducing the voltage threshold for activation and inhibiting channel inactivation. Shows activity on hNav1.6/SCN8A (EC(50)=176 nM), mNav1.7/SCN9A (EC(50)=102 nM) and hNav1.7 (EC(50)=154 nM). In vivo, causes spontaneous, gradual and long-lasting nocifensive behaviors by intraplantar injection in mice, as well as pronounced swelling of the injected paw. Does not have effect on insects (blowflies). This chain is Myrmicitoxin(1)-Pm2a, found in Pogonomyrmex maricopa (Maricopa harvester ant).